The following is a 285-amino-acid chain: Formamidopyrimidine-DNA glycosylase (285 aa).

The active-site Schiff-base intermediate with DNA is the Pro2. Glu3 acts as the Proton donor in catalysis. Residue Lys61 is the Proton donor; for beta-elimination activity of the active site. DNA contacts are provided by His102, Arg121, and Lys163. The segment at 249-283 (NAYGQAGKPCARCGTPIARETFMNRGSHFCNRCQK) adopts an FPG-type zinc-finger fold. Residue Arg273 is the Proton donor; for delta-elimination activity of the active site.

It belongs to the FPG family. As to quaternary structure, monomer. It depends on Zn(2+) as a cofactor.

The catalysed reaction is Hydrolysis of DNA containing ring-opened 7-methylguanine residues, releasing 2,6-diamino-4-hydroxy-5-(N-methyl)formamidopyrimidine.. It carries out the reaction 2'-deoxyribonucleotide-(2'-deoxyribose 5'-phosphate)-2'-deoxyribonucleotide-DNA = a 3'-end 2'-deoxyribonucleotide-(2,3-dehydro-2,3-deoxyribose 5'-phosphate)-DNA + a 5'-end 5'-phospho-2'-deoxyribonucleoside-DNA + H(+). Its function is as follows. Involved in base excision repair of DNA damaged by oxidation or by mutagenic agents. Acts as a DNA glycosylase that recognizes and removes damaged bases. Has a preference for oxidized purines, such as 7,8-dihydro-8-oxoguanine (8-oxoG). Has AP (apurinic/apyrimidinic) lyase activity and introduces nicks in the DNA strand. Cleaves the DNA backbone by beta-delta elimination to generate a single-strand break at the site of the removed base with both 3'- and 5'-phosphates. This is Formamidopyrimidine-DNA glycosylase from Corynebacterium efficiens (strain DSM 44549 / YS-314 / AJ 12310 / JCM 11189 / NBRC 100395).